A 427-amino-acid polypeptide reads, in one-letter code: Serine hydroxymethyltransferase (427 aa).

Residues leucine 122 and 126–128 each bind (6S)-5,6,7,8-tetrahydrofolate; that span reads GHL. The residue at position 231 (lysine 231) is an N6-(pyridoxal phosphate)lysine. 355–357 lines the (6S)-5,6,7,8-tetrahydrofolate pocket; sequence SPF.

It belongs to the SHMT family. In terms of assembly, homodimer. It depends on pyridoxal 5'-phosphate as a cofactor.

The protein resides in the cytoplasm. It catalyses the reaction (6R)-5,10-methylene-5,6,7,8-tetrahydrofolate + glycine + H2O = (6S)-5,6,7,8-tetrahydrofolate + L-serine. Its pathway is one-carbon metabolism; tetrahydrofolate interconversion. The protein operates within amino-acid biosynthesis; glycine biosynthesis; glycine from L-serine: step 1/1. Catalyzes the reversible interconversion of serine and glycine with tetrahydrofolate (THF) serving as the one-carbon carrier. This reaction serves as the major source of one-carbon groups required for the biosynthesis of purines, thymidylate, methionine, and other important biomolecules. Also exhibits THF-independent aldolase activity toward beta-hydroxyamino acids, producing glycine and aldehydes, via a retro-aldol mechanism. This chain is Serine hydroxymethyltransferase, found in Nostoc sp. (strain PCC 7120 / SAG 25.82 / UTEX 2576).